Consider the following 463-residue polypeptide: tRNA-2-methylthio-N(6)-dimethylallyladenosine synthase (463 aa).

Residues 19–135 (RSYWITTFGC…LENLLGKVDL (117 aa)) enclose the MTTase N-terminal domain. Residues Cys28, Cys64, Cys98, Cys170, Cys174, and Cys177 each coordinate [4Fe-4S] cluster. One can recognise a Radical SAM core domain in the interval 156–393 (RESSICGWVN…NALVEKTARN (238 aa)). In terms of domain architecture, TRAM spans 396–463 (QRYINNIESV…RPFSLTGELC (68 aa)).

Belongs to the methylthiotransferase family. MiaB subfamily. As to quaternary structure, monomer. Requires [4Fe-4S] cluster as cofactor.

The protein localises to the cytoplasm. The catalysed reaction is N(6)-dimethylallyladenosine(37) in tRNA + (sulfur carrier)-SH + AH2 + 2 S-adenosyl-L-methionine = 2-methylsulfanyl-N(6)-dimethylallyladenosine(37) in tRNA + (sulfur carrier)-H + 5'-deoxyadenosine + L-methionine + A + S-adenosyl-L-homocysteine + 2 H(+). Functionally, catalyzes the methylthiolation of N6-(dimethylallyl)adenosine (i(6)A), leading to the formation of 2-methylthio-N6-(dimethylallyl)adenosine (ms(2)i(6)A) at position 37 in tRNAs that read codons beginning with uridine. In Prochlorococcus marinus (strain MIT 9312), this protein is tRNA-2-methylthio-N(6)-dimethylallyladenosine synthase.